The sequence spans 368 residues: Peptide chain release factor 2 (368 aa).

An N5-methylglutamine modification is found at Q250.

This sequence belongs to the prokaryotic/mitochondrial release factor family. Post-translationally, methylated by PrmC. Methylation increases the termination efficiency of RF2.

It localises to the cytoplasm. Peptide chain release factor 2 directs the termination of translation in response to the peptide chain termination codons UGA and UAA. This Rickettsia felis (strain ATCC VR-1525 / URRWXCal2) (Rickettsia azadi) protein is Peptide chain release factor 2.